The primary structure comprises 1377 residues: DNA-directed RNA polymerase subunit beta' (1377 aa).

Residues C60, C62, C75, and C78 each coordinate Zn(2+). Positions 449, 451, and 453 each coordinate Mg(2+). C777, C851, C858, and C861 together coordinate Zn(2+).

The protein belongs to the RNA polymerase beta' chain family. In terms of assembly, the RNAP catalytic core consists of 2 alpha, 1 beta, 1 beta' and 1 omega subunit. When a sigma factor is associated with the core the holoenzyme is formed, which can initiate transcription. Mg(2+) is required as a cofactor. It depends on Zn(2+) as a cofactor.

It catalyses the reaction RNA(n) + a ribonucleoside 5'-triphosphate = RNA(n+1) + diphosphate. Its function is as follows. DNA-dependent RNA polymerase catalyzes the transcription of DNA into RNA using the four ribonucleoside triphosphates as substrates. This is DNA-directed RNA polymerase subunit beta' from Borreliella afzelii (strain PKo) (Borrelia afzelii).